The chain runs to 128 residues: Large ribosomal subunit protein bL17 (128 aa).

Belongs to the bacterial ribosomal protein bL17 family. In terms of assembly, part of the 50S ribosomal subunit. Contacts protein L32.

The chain is Large ribosomal subunit protein bL17 from Pseudomonas fluorescens (strain Pf0-1).